Reading from the N-terminus, the 245-residue chain is 1-(5-phosphoribosyl)-5-[(5-phosphoribosylamino)methylideneamino] imidazole-4-carboxamide isomerase (245 aa).

Residue Asp7 is the Proton acceptor of the active site. Asp129 serves as the catalytic Proton donor.

The protein belongs to the HisA/HisF family.

The protein localises to the cytoplasm. It carries out the reaction 1-(5-phospho-beta-D-ribosyl)-5-[(5-phospho-beta-D-ribosylamino)methylideneamino]imidazole-4-carboxamide = 5-[(5-phospho-1-deoxy-D-ribulos-1-ylimino)methylamino]-1-(5-phospho-beta-D-ribosyl)imidazole-4-carboxamide. It functions in the pathway amino-acid biosynthesis; L-histidine biosynthesis; L-histidine from 5-phospho-alpha-D-ribose 1-diphosphate: step 4/9. The protein is 1-(5-phosphoribosyl)-5-[(5-phosphoribosylamino)methylideneamino] imidazole-4-carboxamide isomerase of Shewanella sp. (strain MR-4).